The sequence spans 108 residues: ATP synthase peripheral stalk subunit F6, mitochondrial (108 aa).

The transit peptide at 1–32 (MVLQRIFRLSSVLRSAVSVHLKRNIGVTAVAF) directs the protein to the mitochondrion. 3 positions are modified to N6-acetyllysine: K41, K46, and K79. N6-acetyllysine; alternate occurs at positions 84, 94, and 99. N6-succinyllysine; alternate occurs at positions 84, 94, and 99. K105 carries the post-translational modification N6-acetyllysine. S108 is modified (phosphoserine).

Belongs to the eukaryotic ATPase subunit F6 family. As to quaternary structure, component of the ATP synthase complex composed at least of ATP5F1A/subunit alpha, ATP5F1B/subunit beta, ATP5MC1/subunit c (homooctomer), MT-ATP6/subunit a, MT-ATP8/subunit 8, ATP5ME/subunit e, ATP5MF/subunit f, ATP5MG/subunit g, ATP5MK/subunit k, ATP5MJ/subunit j, ATP5F1C/subunit gamma, ATP5F1D/subunit delta, ATP5F1E/subunit epsilon, ATP5PF/subunit F6, ATP5PB/subunit b, ATP5PD/subunit d, ATP5PO/subunit OSCP. ATP synthase complex consists of a soluble F(1) head domain (subunits alpha(3) and beta(3)) - the catalytic core - and a membrane F(0) domain - the membrane proton channel (subunits c, a, 8, e, f, g, k and j). These two domains are linked by a central stalk (subunits gamma, delta, and epsilon) rotating inside the F1 region and a stationary peripheral stalk (subunits F6, b, d, and OSCP).

The protein localises to the mitochondrion. Its subcellular location is the mitochondrion inner membrane. Its function is as follows. Subunit F6, of the mitochondrial membrane ATP synthase complex (F(1)F(0) ATP synthase or Complex V) that produces ATP from ADP in the presence of a proton gradient across the membrane which is generated by electron transport complexes of the respiratory chain. ATP synthase complex consist of a soluble F(1) head domain - the catalytic core - and a membrane F(1) domain - the membrane proton channel. These two domains are linked by a central stalk rotating inside the F(1) region and a stationary peripheral stalk. During catalysis, ATP synthesis in the catalytic domain of F(1) is coupled via a rotary mechanism of the central stalk subunits to proton translocation. In vivo, can only synthesize ATP although its ATP hydrolase activity can be activated artificially in vitro. Part of the complex F(0) domain. Part of the complex F(0) domain and the peripheric stalk, which acts as a stator to hold the catalytic alpha(3)beta(3) subcomplex and subunit a/ATP6 static relative to the rotary elements. The polypeptide is ATP synthase peripheral stalk subunit F6, mitochondrial (Mus musculus (Mouse)).